A 791-amino-acid chain; its full sequence is uncharacterized protein (791 aa).

The next 4 helical transmembrane spans lie at 104-124, 131-151, 177-197, and 226-246; these read MWILAFGLATVIAGVDAFFLM, IAAIVALLVAYPLGQLWYYII, ACLYIFVNICVSAKLVNTLII, and WSGLALPILVYPPTLIWPSVL. Asparagine 265 is a glycosylation site (N-linked (GlcNAc...) asparagine). Transmembrane regions (helical) follow at residues 274–294, 309–329, 346–366, 421–441, 471–491, 501–521, 533–553, and 583–603; these read FFIVFVASFIWYWFPDLIFPA, SAVLSQIFGVKTGLGLFPLTL, WATCCIFTSFVFWIWIVLPGL, FIINIALSLGAFSSMMISFFL, VHWGFYLASIIVSLGLGFAFT, SYGFVVSMVIGAALYIPLSLI, AFFEIVAAFWFNGQPMALLYF, and LVAALLFTSGIWSSLVNSAVT. The N-linked (GlcNAc...) asparagine glycan is linked to asparagine 621. 3 helical membrane passes run 653–673, 697–717, and 733–753; these read FVMWFFLVGAVVSVVVYLLQI, SVTGINYSTWAAVAFCFNYLI, and AAAMDCGVAIAGLFIYFCVVY. Residue asparagine 759 is glycosylated (N-linked (GlcNAc...) asparagine).

It belongs to the oligopeptide OPT transporter family.

The protein resides in the membrane. This is an uncharacterized protein from Schizosaccharomyces pombe (strain 972 / ATCC 24843) (Fission yeast).